The chain runs to 115 residues: Photosystem II reaction center Psb28 protein (115 aa).

Belongs to the Psb28 family. Part of the photosystem II complex.

The protein localises to the plastid. Its subcellular location is the chloroplast thylakoid membrane. This Pyropia yezoensis (Susabi-nori) protein is Photosystem II reaction center Psb28 protein.